Consider the following 594-residue polypeptide: E3 ubiquitin-protein ligase TRAF7 (594 aa).

The segment at 1–33 (MPPINTPRRSDSAISVRSLHSESSMSLRSTFSL) is disordered. A phosphoserine mark is found at Ser-12 and Ser-15. Positions 15–29 (SVRSLHSESSMSLRS) are enriched in low complexity. An RING-type zinc finger spans residues 55–89 (CQLCCSVFKDPVITTCGHTFCRRCALKSEKCPVDN). A TRAF-type zinc finger spans residues 146 to 216 (HESSCDYRPV…RFEGLKEFLQ (71 aa)). 7 WD repeats span residues 318–357 (GHQG…KCQK), 361–398 (GHDG…KVNT), 401–437 (AHDN…LKLK), 439–478 (ELTG…CIHV), 481–518 (TSGG…QVRT), 521–562 (GHVG…CTQT), and 565–593 (RHQG…KVWT).

The protein belongs to the WD repeat TRAF7 family. In terms of assembly, homodimer. Interacts with MAP3K3 and promotes the kinase activity of this enzyme. Post-translationally, phosphorylated by MAP3K3. In terms of processing, ubiquitinates itself upon phosphorylation. Ubiquitously expressed. Expression is relatively high in heart, liver, kidney, testis, prostate, thyroid, and salivary gland.

The protein resides in the cytoplasmic vesicle. It is found in the cytoplasm. It localises to the nucleus. The catalysed reaction is S-ubiquitinyl-[E2 ubiquitin-conjugating enzyme]-L-cysteine + [acceptor protein]-L-lysine = [E2 ubiquitin-conjugating enzyme]-L-cysteine + N(6)-ubiquitinyl-[acceptor protein]-L-lysine.. It functions in the pathway protein modification; protein ubiquitination. In terms of biological role, E3 ubiquitin and SUMO-protein ligase that plays a role in different biological processes such as innate immunity, inflammation or apoptosis. Potentiates MAP3K3-mediated activation of the NF-kappa-B, JUN/AP1 and DDIT3 transcriptional regulators. Negatively regulates MYB transcriptional activity by sequestering it to the cytosol via SUMOylation. Plays a role in the phosphorylation of MAPK1 and/or MAPK3, probably via its interaction with MAP3K3. Negatively regulates RLR-mediated innate immunity by promoting 'Lys-48'-linked ubiquitination of TBK1 through its RING domain to inhibit the cellular antiviral response. Promotes 'Lys-29'-linked polyubiquitination of NEMO/IKBKG and RELA leading to targeting these two proteins to lysosomal degradative pathways, reducing the transcriptional activity of NF-kappa-B. The sequence is that of E3 ubiquitin-protein ligase TRAF7 from Mus musculus (Mouse).